The following is a 206-amino-acid chain: Adenylate kinase (206 aa).

10–15 (GAGKGT) provides a ligand contact to ATP. The tract at residues 30-59 (STGDMLRAAVAAGTPVGLKAKDIMASGGLV) is NMP. Residues threonine 31, arginine 36, 57 to 59 (GLV), 85 to 88 (GFPR), and glutamine 92 each bind AMP. Residues 126–142 (NRVAETTARGEQVRADD) are LID. Arginine 127 provides a ligand contact to ATP. Arginine 139 and arginine 150 together coordinate AMP. Methionine 178 serves as a coordination point for ATP.

The protein belongs to the adenylate kinase family. In terms of assembly, monomer.

Its subcellular location is the cytoplasm. The enzyme catalyses AMP + ATP = 2 ADP. It participates in purine metabolism; AMP biosynthesis via salvage pathway; AMP from ADP: step 1/1. Functionally, catalyzes the reversible transfer of the terminal phosphate group between ATP and AMP. Plays an important role in cellular energy homeostasis and in adenine nucleotide metabolism. This Nitrobacter winogradskyi (strain ATCC 25391 / DSM 10237 / CIP 104748 / NCIMB 11846 / Nb-255) protein is Adenylate kinase.